The sequence spans 151 residues: Large ribosomal subunit protein eL8 (151 aa).

This sequence belongs to the eukaryotic ribosomal protein eL8 family. Part of the 50S ribosomal subunit. Probably part of the RNase P complex.

The protein localises to the cytoplasm. Functionally, multifunctional RNA-binding protein that recognizes the K-turn motif in ribosomal RNA, the RNA component of RNase P, box H/ACA, box C/D and box C'/D' sRNAs. The protein is Large ribosomal subunit protein eL8 of Pyrobaculum neutrophilum (strain DSM 2338 / JCM 9278 / NBRC 100436 / V24Sta) (Thermoproteus neutrophilus).